The chain runs to 450 residues: Citrate/malate-proton symporter (450 aa).

Topologically, residues 1 to 32 (MGELQTHMQLQTDTIHEGVRKENWFAKAMNIK) are cytoplasmic. The chain crosses the membrane as a helical span at residues 33 to 53 (VGIIPLPVYALLFILITVFVM). Topologically, residues 54–64 (HHDVKSDILTS) are extracellular. The chain crosses the membrane as a helical span at residues 65–85 (IAVMAFFGFTFAQIGKSIPIV). Topologically, residues 86-87 (RS) are cytoplasmic. Residues 88–108 (IGGPAILATFIPSAVVYYHLL) traverse the membrane as a helical segment. The Extracellular portion of the chain corresponds to 109–118 (PNDIVKSTTE). A helical transmembrane segment spans residues 119 to 139 (FTENSNFLYLFIAGIVVGSIL). Residues 140–152 (GMKRETLVKAFMK) are Cytoplasmic-facing. A helical transmembrane segment spans residues 153-173 (IFIPLIVGSVTAAIVGLAVGT). Over 174–217 (LLGLGFQHTLLYIVIPIMAGGVGEGAIPLSIGYSDIMPISQGEA) the chain is Extracellular. Residues 218–238 (FALVLPSIMLGSLCAIILAGL) form a helical membrane-spanning segment. Over 239-273 (LNRIGKKKPEWTGNGKVDRSEEESPALEESQSGQQ) the chain is Cytoplasmic. The interval 249–268 (WTGNGKVDRSEEESPALEES) is disordered. Residues 274–294 (MFNLSLFASGGILAVSLYLVG) traverse the membrane as a helical segment. Position 295 (Met295) is a topological domain, extracellular. Residues 296–316 (LAHDFFGFPAPVAMLLLAVLI) traverse the membrane as a helical segment. The Cytoplasmic portion of the chain corresponds to 317–335 (KLFRLVPASIENGAFGVSR). Residues 336 to 356 (FFSTAVTYPLLFAIGVSMTPW) form a helical membrane-spanning segment. At 357-364 (DKLVAAFN) the chain is on the extracellular side. A helical transmembrane segment spans residues 365–385 (LSNIITILSVVVTMMAVGFFT). Over 386–428 (GKWLNMYPIETAIINACHSGQGGTGDVAILSAAERLELMPFAQ) the chain is Cytoplasmic. Residues 429–446 (VSTRIGGAITVSLTLLLL) form a helical membrane-spanning segment. Topologically, residues 447 to 450 (HQFY) are extracellular.

This sequence belongs to the 2-hydroxycarboxylate transporter (2-HCT) (TC 2.A.24) family.

It localises to the cell membrane. The enzyme catalyses citrate(in) + 3 H(+)(in) = citrate(out) + 3 H(+)(out). The catalysed reaction is (S)-malate(in) + 2 H(+)(in) = (S)-malate(out) + 2 H(+)(out). Its activity is regulated as follows. The uptake activity is inhibited by divalent metal ions such as Ca(2+), Mg(2+) and Ni(2+). Functionally, proton motive force-driven secondary transporter that catalyzes the uptake of both citrate and malate. Is an electroneutral proton-solute symporter: the number of protons transported is equal to the valence of the transported anions. Translocates the free citrate and malate anions. Citramalate binds to the transporter, but it is not translocated. Is strictly stereoselective, recognizing only the (S)-enantiomers of malate and citramalate. This chain is Citrate/malate-proton symporter, found in Bacillus subtilis (strain 168).